The chain runs to 387 residues: DNA double-strand break repair protein Mre11 (387 aa).

Residues aspartate 9, histidine 11, aspartate 50, and asparagine 85 each coordinate Mn(2+). Histidine 86 acts as the Proton donor in catalysis. 3 residues coordinate Mn(2+): histidine 150, aspartate 181, and histidine 183. The tract at residues 365–387 (AVLDDDADAADDDGRPTTVEEFQ) is disordered. A compositionally biased stretch (acidic residues) spans 366–375 (VLDDDADAAD).

Belongs to the MRE11/RAD32 family. As to quaternary structure, homodimer. Forms a heterotetramer composed of two Mre11 subunits and two Rad50 subunits. It depends on Mn(2+) as a cofactor.

With respect to regulation, nuclease activity is regulated by Rad50. Part of the Rad50/Mre11 complex, which is involved in the early steps of DNA double-strand break (DSB) repair. Mre11 binds to DSB ends and has both double-stranded 3'-5' exonuclease activity and single-stranded endonuclease activity. This chain is DNA double-strand break repair protein Mre11, found in Halobacterium salinarum (strain ATCC 700922 / JCM 11081 / NRC-1) (Halobacterium halobium).